Consider the following 485-residue polypeptide: Glutamyl-tRNA(Gln) amidotransferase subunit A (485 aa).

Active-site charge relay system residues include Lys79 and Ser154. Residue Ser178 is the Acyl-ester intermediate of the active site.

Belongs to the amidase family. GatA subfamily. In terms of assembly, heterotrimer of A, B and C subunits.

It carries out the reaction L-glutamyl-tRNA(Gln) + L-glutamine + ATP + H2O = L-glutaminyl-tRNA(Gln) + L-glutamate + ADP + phosphate + H(+). In terms of biological role, allows the formation of correctly charged Gln-tRNA(Gln) through the transamidation of misacylated Glu-tRNA(Gln) in organisms which lack glutaminyl-tRNA synthetase. The reaction takes place in the presence of glutamine and ATP through an activated gamma-phospho-Glu-tRNA(Gln). This Clostridium botulinum (strain Eklund 17B / Type B) protein is Glutamyl-tRNA(Gln) amidotransferase subunit A.